The primary structure comprises 265 residues: Hydroxyethylthiazole kinase (265 aa).

Residue M55 coordinates substrate. ATP-binding residues include R130 and S176. G203 contacts substrate.

The protein belongs to the Thz kinase family. Mg(2+) serves as cofactor.

The catalysed reaction is 5-(2-hydroxyethyl)-4-methylthiazole + ATP = 4-methyl-5-(2-phosphooxyethyl)-thiazole + ADP + H(+). It participates in cofactor biosynthesis; thiamine diphosphate biosynthesis; 4-methyl-5-(2-phosphoethyl)-thiazole from 5-(2-hydroxyethyl)-4-methylthiazole: step 1/1. Catalyzes the phosphorylation of the hydroxyl group of 4-methyl-5-beta-hydroxyethylthiazole (THZ). The polypeptide is Hydroxyethylthiazole kinase (Leptospira interrogans serogroup Icterohaemorrhagiae serovar copenhageni (strain Fiocruz L1-130)).